Consider the following 833-residue polypeptide: DNA gyrase subunit A (833 aa).

The region spanning 34–500 (LPDVRDGLKP…AGDVRDIEDI (467 aa)) is the Topo IIA-type catalytic domain. Y122 acts as the O-(5'-phospho-DNA)-tyrosine intermediate in catalysis. Residues 527 to 533 (QKRGGQG) carry the GyrA-box motif.

It belongs to the type II topoisomerase GyrA/ParC subunit family. In terms of assembly, heterotetramer, composed of two GyrA and two GyrB chains. In the heterotetramer, GyrA contains the active site tyrosine that forms a transient covalent intermediate with DNA, while GyrB binds cofactors and catalyzes ATP hydrolysis.

The protein resides in the cytoplasm. It carries out the reaction ATP-dependent breakage, passage and rejoining of double-stranded DNA.. Its function is as follows. A type II topoisomerase that negatively supercoils closed circular double-stranded (ds) DNA in an ATP-dependent manner to modulate DNA topology and maintain chromosomes in an underwound state. Negative supercoiling favors strand separation, and DNA replication, transcription, recombination and repair, all of which involve strand separation. Also able to catalyze the interconversion of other topological isomers of dsDNA rings, including catenanes and knotted rings. Type II topoisomerases break and join 2 DNA strands simultaneously in an ATP-dependent manner. The chain is DNA gyrase subunit A from Chlamydia muridarum (strain MoPn / Nigg).